The following is a 676-amino-acid chain: Protein cereblon (676 aa).

The span at 1 to 11 (MDDEETAEIDE) shows a compositional bias: acidic residues. Disordered regions lie at residues 1-78 (MDDE…TTAH), 118-194 (EDAG…AVPR), and 249-276 (DDAN…LDVD). Composition is skewed to low complexity over residues 12–33 (TSSS…TETA) and 125–139 (VPQN…TPPA). The segment covering 156-177 (LVNNDSPSQASISSRHSGSDMS) has biased composition (polar residues). One can recognise a Lon N-terminal domain in the interval 314 to 542 (RMLIFMHQHI…IIGTTLKHES (229 aa)). A CULT domain is found at 541–650 (ESLFYCRYCN…LAGSSVRIGK (110 aa)). Zn(2+) contacts are provided by Cys546, Cys549, Cys615, and Cys618.

It belongs to the CRBN family. As to quaternary structure, likely a component of a DCX (DDB1-CUL4-X-box) protein ligase complex. May interact with pic/DDB1. Post-translationally, ubiquitinated.

The protein localises to the nucleus. Its pathway is protein modification; protein ubiquitination. Its function is as follows. Substrate recognition component of a DCX (DDB1-CUL4-X-box) E3 protein ligase complex that mediates the ubiquitination and subsequent proteasomal degradation of target proteins. Has an essential role in mediating growth by negatively regulating insulin signaling. It also has a role in maintaining presynaptic function in the neuromuscular junction synapses of third-instar larvae. This Drosophila mojavensis (Fruit fly) protein is Protein cereblon.